The primary structure comprises 300 residues: tRNA uridine(34) hydroxylase (300 aa).

Residues 128 to 222 enclose the Rhodanese domain; sequence ADPEVIVVDT…YLEDVPQAQS (95 aa). The Cysteine persulfide intermediate role is filled by Cys182.

Belongs to the TrhO family.

It carries out the reaction uridine(34) in tRNA + AH2 + O2 = 5-hydroxyuridine(34) in tRNA + A + H2O. Catalyzes oxygen-dependent 5-hydroxyuridine (ho5U) modification at position 34 in tRNAs. This Deinococcus radiodurans (strain ATCC 13939 / DSM 20539 / JCM 16871 / CCUG 27074 / LMG 4051 / NBRC 15346 / NCIMB 9279 / VKM B-1422 / R1) protein is tRNA uridine(34) hydroxylase.